Consider the following 492-residue polypeptide: Excitatory amino acid transporter (492 aa).

At 1–7 the chain is on the cytoplasmic side; it reads MVSWIRK. A run of 3 helical transmembrane segments spans residues 8 to 28, 47 to 67, and 85 to 105; these read NLLLVLTVSSVVLGALCGFLL, LLMHMLKMMILPLIMSSLISG, and TYYMFTTAVAVVTGIFLVLVI. Over 106–191 the chain is Extracellular; sequence HPGDPTIKKE…VKASVEYTSG (86 aa). 2 N-linked (GlcNAc...) asparagine glycosylation sites follow: N166 and N176. The next 5 helical transmembrane spans lie at 192 to 212, 228 to 248, 270 to 290, 358 to 378, and 389 to 409; these read MNVLGVIVFCIAIGISLSQLG, VIMKLVMTVMWYSPFGILCLI, VTVLSGLAIHSLISLPLIFFV, AVAAIFIAQINGVHLSFGQVV, and IGAASVPSAGLVTMLLVLTAV.

This sequence belongs to the dicarboxylate/amino acid:cation symporter (DAACS) (TC 2.A.23) family.

The protein resides in the membrane. Functionally, transports L-glutamate and also L- and D-aspartate. Essential for terminating the postsynaptic action of glutamate by rapidly removing released glutamate from the synaptic cleft. Acts as a symport by cotransporting sodium. The chain is Excitatory amino acid transporter (GLT-1) from Onchocerca volvulus.